The following is a 356-amino-acid chain: MPRPIVAKVDSAVLASNLSIVRRHAPQAQVWSVVKANGYGHGLNTVWQGLQQTDGFALLDLHEAVVLREKGWRGPILLLEGFFQPADLAVIDRYRLTTVVHSDWQIEALRRMTPRAPLDIYLKLNSGMNRLGFSERALPGAWQSLNALKHVATLTLMSHFAYADMPEGVEGQMAVVARAGEGLTGPRCLANSAATLWHPATHGQWVRPGIILYGASPSGNWQDIAASGLRPVMTLQSELIAVQSVPAGGRIGYGGRHRVSETHRVGVVACGYADGYPRHAPTGTPILVDGVRTSTLGAVSMDMLMVDLQLCPKARIGSAVELWGDHVKIDEVAASAGTLGYELMSALAPRVTVQIR.

Residue Lys35 is the Proton acceptor; specific for D-alanine of the active site. An N6-(pyridoxal phosphate)lysine modification is found at Lys35. Position 130 (Arg130) interacts with substrate. Tyr253 acts as the Proton acceptor; specific for L-alanine in catalysis. Substrate is bound at residue Met301.

This sequence belongs to the alanine racemase family. It depends on pyridoxal 5'-phosphate as a cofactor.

It carries out the reaction L-alanine = D-alanine. It functions in the pathway amino-acid biosynthesis; D-alanine biosynthesis; D-alanine from L-alanine: step 1/1. Its function is as follows. Catalyzes the interconversion of L-alanine and D-alanine. May also act on other amino acids. The chain is Alanine racemase (alr) from Sodalis glossinidius (strain morsitans).